The primary structure comprises 136 residues: MKRHILATVIASLVAAPAMALAAGNNILSVHILDQQTGKPAPGVEVVLEQKKDNGWTQLNTGHTDQDGRIKALWPEKAAAPGDYRVIFKTGQYFESKKLDTFFPEIPVEFHISKTNEHYHVPLLLSQYGYSTYRGS.

The first 22 residues, 1–22 (MKRHILATVIASLVAAPAMALA), serve as a signal peptide directing secretion. H31, R69, and Y133 together coordinate substrate.

This sequence belongs to the transthyretin family. 5-hydroxyisourate hydrolase subfamily. Homotetramer.

Its subcellular location is the periplasm. It carries out the reaction 5-hydroxyisourate + H2O = 5-hydroxy-2-oxo-4-ureido-2,5-dihydro-1H-imidazole-5-carboxylate + H(+). In terms of biological role, catalyzes the hydrolysis of 5-hydroxyisourate (HIU) to 2-oxo-4-hydroxy-4-carboxy-5-ureidoimidazoline (OHCU). The chain is 5-hydroxyisourate hydrolase (hiuH) from Salmonella dublin.